Here is a 476-residue protein sequence, read N- to C-terminus: Bifunctional protein HldE (476 aa).

Residues Met1–Ser318 form a ribokinase region. Asn195–Glu198 is an ATP binding site. Asp264 is an active-site residue. The tract at residues Met344–Gly476 is cytidylyltransferase.

The protein in the N-terminal section; belongs to the carbohydrate kinase PfkB family. This sequence in the C-terminal section; belongs to the cytidylyltransferase family. In terms of assembly, homodimer.

The catalysed reaction is D-glycero-beta-D-manno-heptose 7-phosphate + ATP = D-glycero-beta-D-manno-heptose 1,7-bisphosphate + ADP + H(+). It catalyses the reaction D-glycero-beta-D-manno-heptose 1-phosphate + ATP + H(+) = ADP-D-glycero-beta-D-manno-heptose + diphosphate. It functions in the pathway nucleotide-sugar biosynthesis; ADP-L-glycero-beta-D-manno-heptose biosynthesis; ADP-L-glycero-beta-D-manno-heptose from D-glycero-beta-D-manno-heptose 7-phosphate: step 1/4. Its pathway is nucleotide-sugar biosynthesis; ADP-L-glycero-beta-D-manno-heptose biosynthesis; ADP-L-glycero-beta-D-manno-heptose from D-glycero-beta-D-manno-heptose 7-phosphate: step 3/4. Functionally, catalyzes the phosphorylation of D-glycero-D-manno-heptose 7-phosphate at the C-1 position to selectively form D-glycero-beta-D-manno-heptose-1,7-bisphosphate. In terms of biological role, catalyzes the ADP transfer from ATP to D-glycero-beta-D-manno-heptose 1-phosphate, yielding ADP-D-glycero-beta-D-manno-heptose. This is Bifunctional protein HldE from Aliivibrio fischeri (strain MJ11) (Vibrio fischeri).